The chain runs to 218 residues: Adenylate kinase (218 aa).

Residue 11–16 (GAGKGT) coordinates ATP. The interval 31 to 60 (STGDMFREAMANKTKVGLEAKSYIDKGNLV) is NMP. AMP is bound by residues Thr32, Arg37, 58–60 (NLV), 86–89 (GFPR), and Gln93. An LID region spans residues 127 to 165 (ARYMCKNCGATYNKISKQPKVEGTCDRCGSHEFYQREDD). Arg128 is a binding site for ATP. Zn(2+) is bound by residues Cys131 and Cys134. 137–138 (TY) lines the ATP pocket. Zn(2+) is bound by residues Cys151 and Cys154. The AMP site is built by Arg162 and Arg173. Gln201 is a binding site for ATP.

Belongs to the adenylate kinase family. In terms of assembly, monomer.

Its subcellular location is the cytoplasm. The enzyme catalyses AMP + ATP = 2 ADP. The protein operates within purine metabolism; AMP biosynthesis via salvage pathway; AMP from ADP: step 1/1. Catalyzes the reversible transfer of the terminal phosphate group between ATP and AMP. Plays an important role in cellular energy homeostasis and in adenine nucleotide metabolism. The protein is Adenylate kinase of Lactobacillus acidophilus (strain ATCC 700396 / NCK56 / N2 / NCFM).